Here is a 375-residue protein sequence, read N- to C-terminus: Glutamate 5-kinase (375 aa).

Position 17 (K17) interacts with ATP. 3 residues coordinate substrate: S57, D144, and N156. 176 to 177 lines the ATP pocket; the sequence is TD. In terms of domain architecture, PUA spans 283-361; it reads KGRLWLDTGA…HQIEQILGYV (79 aa).

This sequence belongs to the glutamate 5-kinase family.

The protein resides in the cytoplasm. It carries out the reaction L-glutamate + ATP = L-glutamyl 5-phosphate + ADP. Its pathway is amino-acid biosynthesis; L-proline biosynthesis; L-glutamate 5-semialdehyde from L-glutamate: step 1/2. In terms of biological role, catalyzes the transfer of a phosphate group to glutamate to form L-glutamate 5-phosphate. This Nitrosococcus oceani (strain ATCC 19707 / BCRC 17464 / JCM 30415 / NCIMB 11848 / C-107) protein is Glutamate 5-kinase.